The primary structure comprises 93 residues: DNA/RNA-binding protein Alba (93 aa).

N6-acetyllysine is present on lysine 11.

The protein belongs to the histone-like Alba family. In terms of processing, acetylated. Acetylation at Lys-11 decreases DNA-binding affinity.

Its subcellular location is the cytoplasm. The protein resides in the chromosome. In terms of biological role, binds double-stranded DNA tightly but without sequence specificity. Involved in DNA compaction. This is DNA/RNA-binding protein Alba from Pyrococcus horikoshii (strain ATCC 700860 / DSM 12428 / JCM 9974 / NBRC 100139 / OT-3).